The primary structure comprises 102 residues: UPF0213 protein Ent638_3592 (102 aa).

The GIY-YIG domain occupies 4–79; it reads VCWFLYLVRT…KQLTKRQKER (76 aa).

Belongs to the UPF0213 family.

This Enterobacter sp. (strain 638) protein is UPF0213 protein Ent638_3592.